The sequence spans 142 residues: UPF0275 protein PM0505 (142 aa).

This sequence belongs to the UPF0275 family.

The polypeptide is UPF0275 protein PM0505 (Pasteurella multocida (strain Pm70)).